A 459-amino-acid polypeptide reads, in one-letter code: Transcriptional coactivator YAP1 (459 aa).

A phosphoserine; by LATS1 and LATS2 mark is found at Ser-21, Ser-69, Ser-87, and Ser-119. Disordered stretches follow at residues 51 to 88 (LPDSFFKPPEPKSHSRQASTDAGSGGVLTPHHVRAHSS) and 103 to 129 (SGMASAGASPQHLRQSSYEIPDDVPLP). 2 WW domains span residues 126 to 159 (VPLPPGWEMAKTSSGQRYFLNHIDQTTTWQDPRK) and 186 to 219 (GPLPEGWEQAITPEGEIYYINHKNKTTSWLDPRL). 2 disordered regions span residues 231-254 (TQSAPVKQGGPLPPNPHGGVMGGN) and 307-364 (PTSM…SSYS). The segment at 247–459 (HGGVMGGNNQ…IDKESFLTWL (213 aa)) is transactivation domain. Composition is skewed to polar residues over residues 307–347 (PTSM…SGTY) and 355–364 (DSGLSMSSYS).

This sequence belongs to the YAP1 family. In terms of processing, phosphorylated by lats1 and lats2; leading to cytoplasmic translocation and inactivation. In terms of tissue distribution, ubiquitously expressed throughout development.

The protein localises to the cytoplasm. Its subcellular location is the nucleus. It is found in the cell junction. It localises to the tight junction. The protein resides in the cell membrane. Its function is as follows. Transcriptional regulator which can act both as a coactivator and a corepressor and is the critical downstream regulatory target in the Hippo signaling pathway that plays a pivotal role in organ size control and tumor suppression by restricting proliferation and promoting apoptosis. Plays a key role in tissue tension and 3D tissue shape by regulating cortical actomyosin network formation. This chain is Transcriptional coactivator YAP1, found in Oryzias latipes (Japanese rice fish).